The following is a 596-amino-acid chain: Uptake hydrogenase large subunit (596 aa).

Ni(2+)-binding residues include Cys-75, Cys-78, Cys-575, and Cys-578.

This sequence belongs to the [NiFe]/[NiFeSe] hydrogenase large subunit family. As to quaternary structure, heterodimer of a large and a small subunit. Ni(2+) serves as cofactor.

The protein resides in the cell membrane. The enzyme catalyses H2 + A = AH2. In terms of biological role, this enzyme recycles the H(2) produced by nitrogenase to increase the production of ATP and to protect nitrogenase against inhibition or damage by O(2) under carbon- or phosphate-limited conditions. This is Uptake hydrogenase large subunit (hupB) from Rhizobium leguminosarum bv. viciae.